A 367-amino-acid polypeptide reads, in one-letter code: Phosphoribosylaminoimidazole-succinocarboxamide synthase (367 aa).

This sequence belongs to the SAICAR synthetase family.

The catalysed reaction is 5-amino-1-(5-phospho-D-ribosyl)imidazole-4-carboxylate + L-aspartate + ATP = (2S)-2-[5-amino-1-(5-phospho-beta-D-ribosyl)imidazole-4-carboxamido]succinate + ADP + phosphate + 2 H(+). Its pathway is purine metabolism; IMP biosynthesis via de novo pathway; 5-amino-1-(5-phospho-D-ribosyl)imidazole-4-carboxamide from 5-amino-1-(5-phospho-D-ribosyl)imidazole-4-carboxylate: step 1/2. The protein is Phosphoribosylaminoimidazole-succinocarboxamide synthase of Shewanella baltica (strain OS185).